We begin with the raw amino-acid sequence, 519 residues long: Bifunctional pantoate ligase/cytidylate kinase (519 aa).

A pantoate--beta-alanine ligase region spans residues 1–282; it reads MNLTILRTKT…CGNTRLIDHG (282 aa). 30-37 lines the ATP pocket; sequence MGGLHQGH. H37 (proton donor) is an active-site residue. Q66 contacts (R)-pantoate. Q66 contacts beta-alanine. An ATP-binding site is contributed by 155-158; that stretch reads GEKD. A (R)-pantoate-binding site is contributed by Q161. 192–195 is a binding site for ATP; the sequence is CSSR. A cytidylate kinase region spans residues 283–519; it reads FLMKRNPIVA…PQEVWPTNAT (237 aa).

The protein in the N-terminal section; belongs to the pantothenate synthetase family. It in the C-terminal section; belongs to the cytidylate kinase family. Type 1 subfamily.

It localises to the cytoplasm. The catalysed reaction is (R)-pantoate + beta-alanine + ATP = (R)-pantothenate + AMP + diphosphate + H(+). It catalyses the reaction CMP + ATP = CDP + ADP. It carries out the reaction dCMP + ATP = dCDP + ADP. Its pathway is cofactor biosynthesis; (R)-pantothenate biosynthesis; (R)-pantothenate from (R)-pantoate and beta-alanine: step 1/1. Functionally, catalyzes the condensation of pantoate with beta-alanine in an ATP-dependent reaction via a pantoyl-adenylate intermediate. Catalyzes the transfer of a phosphate group from ATP to either CMP or dCMP to form CDP or dCDP and ADP, respectively. The chain is Bifunctional pantoate ligase/cytidylate kinase from Prochlorococcus marinus (strain SARG / CCMP1375 / SS120).